The primary structure comprises 36 residues: Pancreatic polypeptide (36 aa).

Tyrosine 36 carries the tyrosine amide modification.

Belongs to the NPY family.

Its subcellular location is the secreted. In terms of biological role, hormone secreted by pancreatic cells that acts as a regulator of pancreatic and gastrointestinal functions. In Larus argentatus (Herring gull), this protein is Pancreatic polypeptide (PPY).